The following is a 211-amino-acid chain: MSVRTKICGISTPETLLAAVKNGASHIGFVFFEKSPRAVQPEMASMLINRIPDHIDKIGVLVDPDDNLLERVVHAGLTGFQLHGHETPERVAFIRRTFPKVKIWKALPITRSQDLDQTLHYRGLVDRVLYDARTDGALPGGMGKRFDWRLLKDYNHPMAWALSGGLDADNIAQAVAITGAELVDVSSGVETAPGIKDMDKIAQFLQAVRLL.

This sequence belongs to the TrpF family.

The catalysed reaction is N-(5-phospho-beta-D-ribosyl)anthranilate = 1-(2-carboxyphenylamino)-1-deoxy-D-ribulose 5-phosphate. Its pathway is amino-acid biosynthesis; L-tryptophan biosynthesis; L-tryptophan from chorismate: step 3/5. The protein is N-(5'-phosphoribosyl)anthranilate isomerase of Zymomonas mobilis subsp. pomaceae (strain ATCC 29192 / DSM 22645 / JCM 10191 / CCUG 17912 / NBRC 13757 / NCIMB 11200 / NRRL B-4491 / Barker I).